A 335-amino-acid polypeptide reads, in one-letter code: MKTANFSFALCLSVVIMLFIKCTRSEQDLSVTKDAIAQKSGVTVSAVNLSNLIAYKNSDHQISAGYYRTWRDSATASGNLPSMRWLPDSLDMVMVFPDYTPPENAYWNTLKTNYVPYLHKRGTKVIITLGDLNSATTTGGQDSIGYSSWAKGIYDKWVGEYNLDGIDIDIESSPSGATLTKFVAATKALSKYFGPKSGTGKTFVYDTNQNPTNFFIQTAPRYNYVFLQAYGRSTTNLTTVSGLYAPYISMKQFLPGFSFYEENGYPGNYWNDVRYPQNGTGRAYDYARWQPATGKKGGVFSYAIERDAPLTSSNDNTLRAPNFRVTKDLIKIMNP.

Residues 1–45 (MKTANFSFALCLSVVIMLFIKCTRSEQDLSVTKDAIAQKSGVTVS) form the signal peptide. The GH18 domain occupies 61–321 (QISAGYYRTW…SSNDNTLRAP (261 aa)). Residues serine 73, serine 89, and serine 143 are each glycosylated (O-linked (Man...) serine). The Proton donor role is filled by glutamate 171.

Belongs to the glycosyl hydrolase 18 family. In terms of assembly, monomer. Carbohydrates at Ser-73, Ser-89 and Ser-143 consist of (2-OMe)Man1-4GlcNAcU1-4GlcU1-4Glc1-4(2-OMe)GlcU1-4[(2-OMe)Rham1-2]Man.

It is found in the secreted. The enzyme catalyses an N(4)-(oligosaccharide-(1-&gt;3)-[oligosaccharide-(1-&gt;6)]-beta-D-Man-(1-&gt;4)-beta-D-GlcNAc-(1-&gt;4)-alpha-D-GlcNAc)-L-asparaginyl-[protein] + H2O = an oligosaccharide-(1-&gt;3)-[oligosaccharide-(1-&gt;6)]-beta-D-Man-(1-&gt;4)-D-GlcNAc + N(4)-(N-acetyl-beta-D-glucosaminyl)-L-asparaginyl-[protein]. Endohydrolysis of the di-N-acetylchitobiosyl unit in high-mannose glycopeptides and glycoproteins. Complex biantennary glycans are the preferred substrates. Tri- and tetraantennary glycans are not hydrolyzed, and high mannose glycans are very poor substrates. The polypeptide is Endo-beta-N-acetylglucosaminidase F2 (endOF2) (Elizabethkingia meningoseptica (Chryseobacterium meningosepticum)).